We begin with the raw amino-acid sequence, 357 residues long: MSSLSDLINFNLSDSTEKIIAEYIWVGGSGIDIRSKARTLPGPVSDPAKLPKWNYDGSSTDQAPGKDSEVILYPQAIFKDPFRRGNNILVICDVYTPAGEPLPTNKRYNAAKIFSHPDVAAEVPWYGIEQEYTLLQKDINWPLGWPIGGYPGKQGPYYCGIGADKAYGRDIVDAHYKACLFAGINISGINGEVMPGQWEFQVGPSVGISAGDEIWAARYILERITEISGVVVSFDPKPIPGDWNGAGAHANFSTKSMRENGGYEVIKKAIEKLGLRHKEHIAAYGEGNERRLTGKHETADINVFSWGVANRGSSIRVGRDTEKDGKGYFEDRRPASNMDPYVVTSMIAETTILWKKS.

One can recognise a GS beta-grasp domain in the interval 19–99 (IIAEYIWVGG…VICDVYTPAG (81 aa)). A GS catalytic domain is found at 106 to 357 (KRYNAAKIFS…AETTILWKKS (252 aa)).

It belongs to the glutamine synthetase family. Homooctamer.

The protein localises to the cytoplasm. It carries out the reaction L-glutamate + NH4(+) + ATP = L-glutamine + ADP + phosphate + H(+). In Pisum sativum (Garden pea), this protein is Glutamine synthetase root isozyme B (GS3B).